The primary structure comprises 319 residues: Methyltransferase tpcM (319 aa).

The segment at 63–155 is methyltransferase domain; sequence DVGAGIGPYA…QLRPGGTFAC (93 aa).

The protein belongs to the methyltransferase superfamily. As to expression, specifically expressed in conidia.

It functions in the pathway secondary metabolite biosynthesis. Its function is as follows. Methyltransferase; part of the gene cluster that mediates the biosynthesis of trypacidin, a mycotoxin with antiprotozoal activity and that plays a role in the infection process. The pathway begins with the synthesis of atrochrysone thioester by the polyketide synthase (PKS) tpcC. The atrochrysone carboxyl ACP thioesterase tpcB then breaks the thioester bond and releases the atrochrysone carboxylic acid from tpcC. The decarboxylase tpcK converts atrochrysone carboxylic acid to atrochrysone which is further reduced into emodin anthrone. The next step is performed by the emodin anthrone oxygenase tpcL that catalyzes the oxidation of emodinanthrone to emodin. Emodin O-methyltransferase encoded by tpcA catalyzes methylation of the 8-hydroxy group of emodin to form questin. Ring cleavage of questin by questin oxidase tpcI leads to desmethylsulochrin via several intermediates including questin epoxide. Another methylation step catalyzed by tpcM leads to the formation of sulochrin which is further converted to monomethylsulfochrin by tpcH. Finally, the tpcJ catalyzes the conversion of monomethylsulfochrin to trypacidin. Trypacidin is toxic for human pulmonary and bronchial epithelial cells by initiating the intracellular formation of nitric oxide (NO) and hydrogen peroxide (H(2)O(2)), thus triggering host necrotic cell death. The trypacidin pathway is also able to produce endocrocin via a distinct route from the endocrocin Enc pathway. This is Methyltransferase tpcM from Aspergillus fumigatus (strain ATCC MYA-4609 / CBS 101355 / FGSC A1100 / Af293) (Neosartorya fumigata).